An 86-amino-acid chain; its full sequence is Cell division topological specificity factor (86 aa).

The protein belongs to the MinE family.

Functionally, prevents the cell division inhibition by proteins MinC and MinD at internal division sites while permitting inhibition at polar sites. This ensures cell division at the proper site by restricting the formation of a division septum at the midpoint of the long axis of the cell. The polypeptide is Cell division topological specificity factor (Allorhizobium ampelinum (strain ATCC BAA-846 / DSM 112012 / S4) (Agrobacterium vitis (strain S4))).